Here is a 244-residue protein sequence, read N- to C-terminus: 5-oxoprolinase subunit A (244 aa).

It belongs to the LamB/PxpA family. In terms of assembly, forms a complex composed of PxpA, PxpB and PxpC.

The catalysed reaction is 5-oxo-L-proline + ATP + 2 H2O = L-glutamate + ADP + phosphate + H(+). In terms of biological role, catalyzes the cleavage of 5-oxoproline to form L-glutamate coupled to the hydrolysis of ATP to ADP and inorganic phosphate. The chain is 5-oxoprolinase subunit A from Salmonella typhimurium (strain LT2 / SGSC1412 / ATCC 700720).